A 305-amino-acid chain; its full sequence is Tyrosine recombinase XerC (305 aa).

The region spanning 1–94 (MSSVDEFLTY…ACRSYYAWLL (94 aa)) is the Core-binding (CB) domain. The 178-residue stretch at 115-292 (KLPQVLDADE…DFQHLAKVYD (178 aa)) folds into the Tyr recombinase domain. Catalysis depends on residues Arg154, Lys178, His244, Arg247, and His270. The active-site O-(3'-phospho-DNA)-tyrosine intermediate is the Tyr279.

Belongs to the 'phage' integrase family. XerC subfamily. Forms a cyclic heterotetrameric complex composed of two molecules of XerC and two molecules of XerD.

It localises to the cytoplasm. Site-specific tyrosine recombinase, which acts by catalyzing the cutting and rejoining of the recombining DNA molecules. The XerC-XerD complex is essential to convert dimers of the bacterial chromosome into monomers to permit their segregation at cell division. It also contributes to the segregational stability of plasmids. The chain is Tyrosine recombinase XerC from Xanthomonas axonopodis pv. citri (strain 306).